A 190-amino-acid polypeptide reads, in one-letter code: 6,7-dimethyl-8-ribityllumazine synthase (190 aa).

5-amino-6-(D-ribitylamino)uracil is bound by residues phenylalanine 23, 61–63 (SFE), and 85–87 (AVI). 90-91 (QT) provides a ligand contact to (2S)-2-hydroxy-3-oxobutyl phosphate. Catalysis depends on histidine 93, which acts as the Proton donor. Position 118 (phenylalanine 118) interacts with 5-amino-6-(D-ribitylamino)uracil. (2S)-2-hydroxy-3-oxobutyl phosphate is bound at residue arginine 132.

This sequence belongs to the DMRL synthase family.

It catalyses the reaction (2S)-2-hydroxy-3-oxobutyl phosphate + 5-amino-6-(D-ribitylamino)uracil = 6,7-dimethyl-8-(1-D-ribityl)lumazine + phosphate + 2 H2O + H(+). Its pathway is cofactor biosynthesis; riboflavin biosynthesis; riboflavin from 2-hydroxy-3-oxobutyl phosphate and 5-amino-6-(D-ribitylamino)uracil: step 1/2. Functionally, catalyzes the formation of 6,7-dimethyl-8-ribityllumazine by condensation of 5-amino-6-(D-ribitylamino)uracil with 3,4-dihydroxy-2-butanone 4-phosphate. This is the penultimate step in the biosynthesis of riboflavin. In Trichormus variabilis (strain ATCC 29413 / PCC 7937) (Anabaena variabilis), this protein is 6,7-dimethyl-8-ribityllumazine synthase.